Consider the following 376-residue polypeptide: MNAITSASAIRTVHVPLGERAYDILIGPGLIARAGAEIASRLKGRKAAVVTDENVAPLYLKALVASLDEAGIASAEVVLPAGEKTKSFEHLITACDKLLEARVERNDYVIALGGGVIGDLSGFAAGIVRRGVRFVQVPTSLLSQVDSSVGGKTGINSRHGKNLIGVFHQPDLVLADTDVLNSLSEREFRAGYAEVAKYGLIDKPDFFAWLEANWKSVFTGGSARIEAIAASCQAKADVVVADERENGQRALLNLGHTFGHALEAATAYDSSRLVHGEGVSIGMVLAYEFSARMNLASPDDARRVERHLKEVGLPTRMSDIPGDLPPAETLMDAIAQDKKVKSGKLTFILTRGIGQSFVADDVPASEVISFLREKHA.

NAD(+) contacts are provided by residues 115–119, 139–140, Lys-152, and Lys-161; these read GVIGD and TS. Zn(2+) contacts are provided by Glu-194, His-256, and His-275.

This sequence belongs to the sugar phosphate cyclases superfamily. Dehydroquinate synthase family. It depends on Co(2+) as a cofactor. Zn(2+) is required as a cofactor. NAD(+) serves as cofactor.

The protein localises to the cytoplasm. It carries out the reaction 7-phospho-2-dehydro-3-deoxy-D-arabino-heptonate = 3-dehydroquinate + phosphate. The protein operates within metabolic intermediate biosynthesis; chorismate biosynthesis; chorismate from D-erythrose 4-phosphate and phosphoenolpyruvate: step 2/7. Catalyzes the conversion of 3-deoxy-D-arabino-heptulosonate 7-phosphate (DAHP) to dehydroquinate (DHQ). The sequence is that of 3-dehydroquinate synthase from Rhizobium johnstonii (strain DSM 114642 / LMG 32736 / 3841) (Rhizobium leguminosarum bv. viciae).